The following is a 630-amino-acid chain: Probable potassium transport system protein Kup (630 aa).

12 consecutive transmembrane segments (helical) span residues 17 to 37 (LAIA…LYSL), 51 to 71 (PSAI…VVGI), 105 to 125 (ITGL…GDAV), 144 to 164 (PQLS…LFWI), 175 to 195 (LFGP…IYHI), 218 to 238 (VLLA…AEAL), 255 to 275 (YVLV…LLLL), 283 to 303 (PFFL…STVA), 344 to 364 (IYVP…VIGF), 374 to 394 (YGIA…VVMV), 402 to 422 (LLVA…FGAN), and 428 to 448 (QGGW…MTWY).

Belongs to the HAK/KUP transporter (TC 2.A.72) family.

It is found in the cell inner membrane. It catalyses the reaction K(+)(in) + H(+)(in) = K(+)(out) + H(+)(out). Transport of potassium into the cell. Likely operates as a K(+):H(+) symporter. This Burkholderia mallei (strain NCTC 10247) protein is Probable potassium transport system protein Kup.